We begin with the raw amino-acid sequence, 202 residues long: Translation initiation factor IF-3 (202 aa).

The protein belongs to the IF-3 family. Monomer.

It is found in the cytoplasm. In terms of biological role, IF-3 binds to the 30S ribosomal subunit and shifts the equilibrium between 70S ribosomes and their 50S and 30S subunits in favor of the free subunits, thus enhancing the availability of 30S subunits on which protein synthesis initiation begins. This Prochlorococcus marinus (strain MIT 9211) protein is Translation initiation factor IF-3.